The chain runs to 138 residues: MPNFSGNWKIIRSENFEELLKVLGVNVMLRKIAVAAASKPAVEIKQEGDTFYIKTSTTVRTTEINFKVGEEFEEQTVDGRPCKSLVKWESENKMVCEQKLLKGEGPKTSWTRELTNDGELILTMTADDVVCTRVYVRE.

Positions 21–31 match the Nuclear localization signal motif; that stretch reads KVLGVNVMLRK. Lysine 102 is covalently cross-linked (Glycyl lysine isopeptide (Lys-Gly) (interchain with G-Cter in SUMO)). All-trans-retinoate is bound at residue 133–135; that stretch reads RVY.

Belongs to the calycin superfamily. Fatty-acid binding protein (FABP) family. Interacts with RXR and RARA. Interacts with importin alpha. Sumoylated in response to retinoic acid binding, sumoylation is critical for dissociation from ER and subsequent nuclear translocation.

Its subcellular location is the cytoplasm. The protein localises to the endoplasmic reticulum. It localises to the nucleus. Transports retinoic acid to the nucleus. Regulates the access of retinoic acid to the nuclear retinoic acid receptors. The polypeptide is Cellular retinoic acid-binding protein 2 (CRABP2) (Homo sapiens (Human)).